Reading from the N-terminus, the 545-residue chain is 2-succinyl-5-enolpyruvyl-6-hydroxy-3-cyclohexene-1-carboxylate synthase (545 aa).

Polar residues predominate over residues 170–185 (QVSGLQRSAPAPSSDS). Residues 170 to 193 (QVSGLQRSAPAPSSDSPLGAAPQL) are disordered.

This sequence belongs to the TPP enzyme family. MenD subfamily. As to quaternary structure, homodimer. It depends on Mg(2+) as a cofactor. Mn(2+) is required as a cofactor. Requires thiamine diphosphate as cofactor.

It carries out the reaction isochorismate + 2-oxoglutarate + H(+) = 5-enolpyruvoyl-6-hydroxy-2-succinyl-cyclohex-3-ene-1-carboxylate + CO2. Its pathway is quinol/quinone metabolism; 1,4-dihydroxy-2-naphthoate biosynthesis; 1,4-dihydroxy-2-naphthoate from chorismate: step 2/7. The protein operates within cofactor biosynthesis; phylloquinone biosynthesis. Functionally, catalyzes the thiamine diphosphate-dependent decarboxylation of 2-oxoglutarate and the subsequent addition of the resulting succinic semialdehyde-thiamine pyrophosphate anion to isochorismate to yield 2-succinyl-5-enolpyruvyl-6-hydroxy-3-cyclohexene-1-carboxylate (SEPHCHC). This chain is 2-succinyl-5-enolpyruvyl-6-hydroxy-3-cyclohexene-1-carboxylate synthase, found in Parasynechococcus marenigrum (strain WH8102).